A 422-amino-acid chain; its full sequence is MVLHQQRFSLDHGAFCQTLAQTENLLIVQDLDGVCMELVQDPLSRRLDADYVRATTLFAEHFYVLTNGEHVGKRGVQGIVEQSFGDASFVQQEGLYLPGLAAGGVQWQDRHGKVSHPGVGQTELEFLAAVPEKITNCLKTFFGDRPHSLSPEQLQTGIEASVLDNVASPTANLNTLANLLQDFPQIYRDLQETMAQLLDQLMAEAVAQGLGNSFFVHYAPNLGRDERGKEIIRWAKAGDSGTTDFQFMLRGGVKEAGVLALLNRYYHNRTGQYPLGESFSARQAPPSHQDLLHLVKAQFDPALMPLIIGVGDTVTSQVDEATGEIRRGGSDRQFLQLIQDLGDWGNHGNLVVYVDSSQGEVKNRQPLQLETVAGQTQVVAGPGDMRDREEPLKINVAFPGGHDQYVAAFKQAAQRRRVHFSQ.

Asp403 (proton donor) is an active-site residue.

The protein belongs to the histidine acid phosphatase family. In terms of assembly, monomer. Interacts with GGPS.

The enzyme catalyses 2-O-(alpha-D-glucopyranosyl)-sn-glycerol 3-phosphate + H2O = 2-O-(alpha-D-glucopyranosyl)glycerol + phosphate. In terms of biological role, phosphorylates glucosylglycerol-phosphate the precursor of the osmoprotectant glucosylglycerol necessary for salt adaptation of Synechocystis. This Synechocystis sp. (strain ATCC 27184 / PCC 6803 / Kazusa) protein is Glucosylglycerol-phosphate phosphatase (stpA).